Here is a 1361-residue protein sequence, read N- to C-terminus: Xanthine dehydrogenase 1 (1361 aa).

Residues 15-101 (TEALLYVNGV…GMHVISIEGL (87 aa)) form the 2Fe-2S ferredoxin-type domain. The [2Fe-2S] cluster site is built by Cys53, Cys58, Cys61, Cys83, Cys123, Cys126, Cys159, and Cys161. Residues 257 to 442 (RGNGGITWYR…LSVFLPWTRP (186 aa)) form the FAD-binding PCMH-type domain. FAD is bound by residues 285-292 (LLVGNTEV), Phe365, 375-379 (CIGGN), Asp388, Leu432, and Lys450. Positions 796 and 827 each coordinate Mo-molybdopterin. Glu831 and Arg909 together coordinate substrate. Arg941 is a binding site for Mo-molybdopterin. Substrate contacts are provided by Phe943 and Thr1039. Ala1108 is a Mo-molybdopterin binding site. Residue Glu1297 is the Proton acceptor of the active site.

This sequence belongs to the xanthine dehydrogenase family. In terms of assembly, homodimer. [2Fe-2S] cluster serves as cofactor. FAD is required as a cofactor. The cofactor is Mo-molybdopterin. Expressed in roots, leaves, stems, flowers and siliques.

It catalyses the reaction xanthine + NAD(+) + H2O = urate + NADH + H(+). The enzyme catalyses hypoxanthine + NAD(+) + H2O = xanthine + NADH + H(+). In terms of biological role, key enzyme involved in purine catabolism. Catalyzes the oxidation of hypoxanthine to xanthine and the oxidation of xanthine to urate. Regulates the level of ureides and plays an important role during plant growth and development, senescence and response to stresses. Possesses NADH oxidase activity and may contribute to the generation of superoxide anions in planta. The protein is Xanthine dehydrogenase 1 (XDH1) of Arabidopsis thaliana (Mouse-ear cress).